A 229-amino-acid chain; its full sequence is Small ribosomal subunit protein uS2c (229 aa).

The protein belongs to the universal ribosomal protein uS2 family.

The protein resides in the plastid. The protein localises to the chloroplast. This Emiliania huxleyi (Coccolithophore) protein is Small ribosomal subunit protein uS2c (rps2).